A 246-amino-acid polypeptide reads, in one-letter code: E3 ubiquitin-protein ligase MARCHF2 (246 aa).

Residues 56–116 form an RING-CH-type zinc finger; sequence GTQSDGPICR…ELCHTEFAVE (61 aa). Residues C64, C67, C80, C82, H90, C93, C106, and C109 each contribute to the Zn(2+) site. Helical transmembrane passes span 138–158 and 175–195; these read LFCDMVCFLFITPLAAISGWL and AVGLIALTIALFTIYVLWTLV.

It localises to the endoplasmic reticulum membrane. The protein localises to the lysosome membrane. It is found in the endosome membrane. The catalysed reaction is S-ubiquitinyl-[E2 ubiquitin-conjugating enzyme]-L-cysteine + [acceptor protein]-L-lysine = [E2 ubiquitin-conjugating enzyme]-L-cysteine + N(6)-ubiquitinyl-[acceptor protein]-L-lysine.. Its pathway is protein modification; protein ubiquitination. E3 ubiquitin-protein ligase which may be involved in endosomal trafficking. E3 ubiquitin ligases accept ubiquitin from an E2 ubiquitin-conjugating enzyme in the form of a thioester and then directly transfer the ubiquitin to targeted substrates. The chain is E3 ubiquitin-protein ligase MARCHF2 (marchf2) from Xenopus tropicalis (Western clawed frog).